The sequence spans 178 residues: Large ribosomal subunit protein uL6 (178 aa).

It belongs to the universal ribosomal protein uL6 family. As to quaternary structure, part of the 50S ribosomal subunit.

This protein binds to the 23S rRNA, and is important in its secondary structure. It is located near the subunit interface in the base of the L7/L12 stalk, and near the tRNA binding site of the peptidyltransferase center. The sequence is that of Large ribosomal subunit protein uL6 from Gluconobacter oxydans (strain 621H) (Gluconobacter suboxydans).